The sequence spans 432 residues: Gamma-glutamyl phosphate reductase (432 aa).

Belongs to the gamma-glutamyl phosphate reductase family.

The protein localises to the cytoplasm. The enzyme catalyses L-glutamate 5-semialdehyde + phosphate + NADP(+) = L-glutamyl 5-phosphate + NADPH + H(+). The protein operates within amino-acid biosynthesis; L-proline biosynthesis; L-glutamate 5-semialdehyde from L-glutamate: step 2/2. Its function is as follows. Catalyzes the NADPH-dependent reduction of L-glutamate 5-phosphate into L-glutamate 5-semialdehyde and phosphate. The product spontaneously undergoes cyclization to form 1-pyrroline-5-carboxylate. The polypeptide is Gamma-glutamyl phosphate reductase (Clavibacter michiganensis subsp. michiganensis (strain NCPPB 382)).